Reading from the N-terminus, the 278-residue chain is Large ribosomal subunit protein uL2 (278 aa).

Residues 202–278 are disordered; it reads ANINDGKAGR…IMRSRHQRKK (77 aa).

It belongs to the universal ribosomal protein uL2 family. As to quaternary structure, part of the 50S ribosomal subunit. Forms a bridge to the 30S subunit in the 70S ribosome.

Its function is as follows. One of the primary rRNA binding proteins. Required for association of the 30S and 50S subunits to form the 70S ribosome, for tRNA binding and peptide bond formation. It has been suggested to have peptidyltransferase activity; this is somewhat controversial. Makes several contacts with the 16S rRNA in the 70S ribosome. This Rhizobium johnstonii (strain DSM 114642 / LMG 32736 / 3841) (Rhizobium leguminosarum bv. viciae) protein is Large ribosomal subunit protein uL2.